A 411-amino-acid polypeptide reads, in one-letter code: 1-deoxy-D-xylulose 5-phosphate reductoisomerase (411 aa).

NADPH-binding residues include threonine 11, glycine 12, serine 13, isoleucine 14, and asparagine 124. Lysine 125 provides a ligand contact to 1-deoxy-D-xylulose 5-phosphate. Glutamate 126 is a binding site for NADPH. Residue aspartate 150 coordinates Mn(2+). 4 residues coordinate 1-deoxy-D-xylulose 5-phosphate: serine 151, glutamate 152, serine 186, and histidine 209. Position 152 (glutamate 152) interacts with Mn(2+). Glycine 215 provides a ligand contact to NADPH. 1-deoxy-D-xylulose 5-phosphate-binding residues include serine 222, asparagine 227, lysine 228, and glutamate 231. Glutamate 231 provides a ligand contact to Mn(2+).

It belongs to the DXR family. The cofactor is Mg(2+). It depends on Mn(2+) as a cofactor.

The enzyme catalyses 2-C-methyl-D-erythritol 4-phosphate + NADP(+) = 1-deoxy-D-xylulose 5-phosphate + NADPH + H(+). It functions in the pathway isoprenoid biosynthesis; isopentenyl diphosphate biosynthesis via DXP pathway; isopentenyl diphosphate from 1-deoxy-D-xylulose 5-phosphate: step 1/6. Functionally, catalyzes the NADPH-dependent rearrangement and reduction of 1-deoxy-D-xylulose-5-phosphate (DXP) to 2-C-methyl-D-erythritol 4-phosphate (MEP). The sequence is that of 1-deoxy-D-xylulose 5-phosphate reductoisomerase from Psychrobacter sp. (strain PRwf-1).